Here is a 205-residue protein sequence, read N- to C-terminus: HTH-type transcriptional regulator LuxR (205 aa).

The HTH tetR-type domain maps to 15-75; sequence LKRKQQLMEI…EVLNHVVRQF (61 aa). Residues 39–58 constitute a DNA-binding region (H-T-H motif); it reads HADIAEIAQVSVATVFNYFP.

Its function is as follows. Regulatory protein of bacterial bioluminescence. It probably binds the autoinducer molecule and potentiates the transcription of the bioluminescence operon. In Vibrio harveyi (Beneckea harveyi), this protein is HTH-type transcriptional regulator LuxR (luxR).